A 153-amino-acid polypeptide reads, in one-letter code: Ribosome maturation factor RimP (153 aa).

The protein belongs to the RimP family.

The protein resides in the cytoplasm. Its function is as follows. Required for maturation of 30S ribosomal subunits. This Clostridium botulinum (strain Langeland / NCTC 10281 / Type F) protein is Ribosome maturation factor RimP.